The primary structure comprises 252 residues: Mitochondrial peculiar membrane protein 1 (252 aa).

Residues 230–252 (TTTTSKGSSPQVKHKVVSVDEDN) are disordered.

The protein resides in the mitochondrion membrane. The protein is Mitochondrial peculiar membrane protein 1 (MPM1) of Saccharomyces cerevisiae (strain ATCC 204508 / S288c) (Baker's yeast).